The chain runs to 179 residues: Large ribosomal subunit protein uL5 (179 aa).

Belongs to the universal ribosomal protein uL5 family. As to quaternary structure, part of the 50S ribosomal subunit; part of the 5S rRNA/L5/L18/L25 subcomplex. Contacts the 5S rRNA and the P site tRNA. Forms a bridge to the 30S subunit in the 70S ribosome.

In terms of biological role, this is one of the proteins that bind and probably mediate the attachment of the 5S RNA into the large ribosomal subunit, where it forms part of the central protuberance. In the 70S ribosome it contacts protein S13 of the 30S subunit (bridge B1b), connecting the 2 subunits; this bridge is implicated in subunit movement. Contacts the P site tRNA; the 5S rRNA and some of its associated proteins might help stabilize positioning of ribosome-bound tRNAs. The sequence is that of Large ribosomal subunit protein uL5 from Pseudoalteromonas translucida (strain TAC 125).